The following is a 139-amino-acid chain: Non-structural protein 1 (139 aa).

A DLNP; interaction with MAP1B motif is present at residues D136–S139.

The protein belongs to the pneumovirus non-structural protein 1 family. As to quaternary structure, monomer. Homomultimer. Heteromultimer with NS2. Interacts with the matrix protein M. Interacts with host ELOC and CUL2; this interaction allows NS1 to form an active E3 ligase with ELOC and CUL2. Interacts with host IRF3; this interaction leads to the disrupted association of IRF3 with CREBBP and thus reduced binding of IRF3 to the IFN-beta promoter. Interacts with host MAVS; this interaction prevents MAVS binding to RIGI and inhibits signaling pathway leading to interferon production. Interacts with host MAP1B/microtubule-associated protein 1B. Interacts with host TRIM25 (via SPRY domain); this interaction suppresses RIGI ubiquitination and results in decreased interaction between RIGI and MAVS.

Its subcellular location is the host cytoplasm. The protein localises to the host mitochondrion. It is found in the host nucleus. In terms of biological role, plays a major role in antagonizing the type I IFN-mediated antiviral response by degrading or inhibiting multiple cellular factors required for either IFN induction or response pathways. Acts cooperatively with NS2 to repress activation and nuclear translocation of host IFN-regulatory factor IRF3. Also disrupts the association of IRF3 with CREBBP. Interacts with host mitochondrial-associated membrane (MAM) MAVS and prevents the interaction with RIGI. Interacts with TRIM25 to suppress TRIM25-mediated RIGI ubiquitination and thereby RIGI-MAVS interaction. Together with NS2, participates in the proteasomal degradation of host STAT2, IRF3, IRF7, TBK1 and RIGI through a NS-degradasome involving CUL2 and Elongin-C. The degradasome requires an intact mitochondrial MAVS. Decreases the levels of host TRAF3 and IKBKE/IKK-epsilon. As functions other than disruptions of the type I IFN-mediated antiviral signaling pathways, induces host SOCS1 and SOCS3 expression. Suppresses premature apoptosis by an NF-kappa-B-dependent, interferon-independent mechanism and thus facilitates virus growth. Additionally, NS1 may serve some inhibitory role in viral transcription and RNA replication. Suppresses proliferation and activation of host CD103+ CD8+ cytotoxic T-lymphocytes and Th17 helper T-lymphocytes. The protein is Non-structural protein 1 (1C) of Homo sapiens (Human).